The primary structure comprises 462 residues: N-myc proto-oncogene protein (462 aa).

Residues 19–47 (LEFDSLQPCFYPDEDDFYFGGPDSTPPGE) form an interaction with AURKA region. The segment at 61 to 90 (LSPSRAFPEHSPEPSNWATEMLLPEADLWG) is interaction with AURKA and FBXW7. The 9aaTAD signature appears at 76–85 (NWATEMLLPE). 3 disordered regions span residues 134–177 (KLQH…ATLP), 232–289 (AAPA…SSNN), and 332–390 (APSP…LERQ). Low complexity-rich tracts occupy residues 143–176 (GVSS…GATL) and 232–244 (AAPA…PASS). Over residues 257-276 (TLSDSDDEDDEEEDEEEEID) the composition is skewed to acidic residues. Residues S259 and S261 each carry the phosphoserine; by CK2 modification. The region spanning 379–431 (ERRRNHNILERQRRNDLRSSFLTLRDHVPELVKNEKAAKVVILKKATEYVHAL) is the bHLH domain. Positions 431–452 (LQANEHQLLLEKEKLQARQQQL) are leucine-zipper.

Efficient DNA binding requires dimerization with another bHLH protein. Binds DNA as a heterodimer with MAX. Interacts with KDM5A, KDM5B and HUWE1. Interacts with MYCNOS. Interacts with AURKA; interaction is phospho-independent and triggers AURKA activation; AURKA competes with FBXW7 for binding to unphosphorylated MYCN but not for binding to unphosphorylated MYCN. Interacts with FBXW7; FBXW7 competes with AURKA for binding to unphosphorylated MYCN but not for binding to phosphorylated MYCN. In terms of processing, phosphorylated by GSK3-beta which may promote its degradation. Phosphorylated by AURKA.

It localises to the nucleus. Its function is as follows. Positively regulates the transcription of MYCNOS in neuroblastoma cells. The polypeptide is N-myc proto-oncogene protein (Mycn) (Mus musculus (Mouse)).